We begin with the raw amino-acid sequence, 217 residues long: Ribonuclease HII (217 aa).

The region spanning 25–215 is the RNase H type-2 domain; it reads KLIAGVDESG…VKHVISDINR (191 aa). A divalent metal cation is bound by residues Asp31, Glu32, and Asp123.

This sequence belongs to the RNase HII family. Requires Mn(2+) as cofactor. Mg(2+) is required as a cofactor.

It is found in the cytoplasm. The enzyme catalyses Endonucleolytic cleavage to 5'-phosphomonoester.. Its function is as follows. Endonuclease that specifically degrades the RNA of RNA-DNA hybrids. The chain is Ribonuclease HII from Blochmanniella pennsylvanica (strain BPEN).